The sequence spans 909 residues: Protein translocase subunit SecA (909 aa).

ATP is bound by residues Gln87, 105-109 (GEGKT), and Asp507. The tract at residues 857 to 909 (DTHSELAEEQPPVAENRENKQQPFVRKNEKVGRNDPCPCGSGKKYKQCHGKLN) is disordered. The span at 871-889 (ENRENKQQPFVRKNEKVGR) shows a compositional bias: basic and acidic residues. Zn(2+) contacts are provided by Cys893, Cys895, Cys904, and His905. The segment covering 899–909 (KKYKQCHGKLN) has biased composition (basic residues).

Belongs to the SecA family. In terms of assembly, monomer and homodimer. Part of the essential Sec protein translocation apparatus which comprises SecA, SecYEG and auxiliary proteins SecDF-YajC and YidC. Zn(2+) is required as a cofactor.

The protein localises to the cell inner membrane. Its subcellular location is the cytoplasm. It carries out the reaction ATP + H2O + cellular proteinSide 1 = ADP + phosphate + cellular proteinSide 2.. Part of the Sec protein translocase complex. Interacts with the SecYEG preprotein conducting channel. Has a central role in coupling the hydrolysis of ATP to the transfer of proteins into and across the cell membrane, serving both as a receptor for the preprotein-SecB complex and as an ATP-driven molecular motor driving the stepwise translocation of polypeptide chains across the membrane. The chain is Protein translocase subunit SecA from Nitrosomonas europaea (strain ATCC 19718 / CIP 103999 / KCTC 2705 / NBRC 14298).